Reading from the N-terminus, the 273-residue chain is Putative tyrosine-protein phosphatase H16_A0669 (273 aa).

Positions 1–15 (MIKWLQRAGCLSAHA) are cleaved as a signal peptide. The active-site Phosphocysteine intermediate is Cys-169.

This sequence belongs to the protein-tyrosine phosphatase family.

It catalyses the reaction O-phospho-L-tyrosyl-[protein] + H2O = L-tyrosyl-[protein] + phosphate. This Cupriavidus necator (strain ATCC 17699 / DSM 428 / KCTC 22496 / NCIMB 10442 / H16 / Stanier 337) (Ralstonia eutropha) protein is Putative tyrosine-protein phosphatase H16_A0669.